The sequence spans 541 residues: Effector protein hopAB1 (541 aa).

3 disordered regions span residues 1 to 94, 168 to 222, and 317 to 338; these read MPGI…EAQQ, QRAL…RHPQ, and RQTT…SGRR. Basic and acidic residues predominate over residues 18–31; sequence TDGEPVTEREHDSS. Residues 183-196 show a composition bias toward low complexity; that stretch reads SSSGSSQRSLIGRS.

This sequence belongs to the HopAB family.

It localises to the secreted. Its function is as follows. Effector protein that plays different roles depending on the species and plant cultivars that interact with the pathogen. Acts as a virulence determinant by enhancing the development of disease symptoms and bacterial growth. Acts as an avirulence factor by eliciting hypersensitive response (HR) and plant resistance. The polypeptide is Effector protein hopAB1 (hopAB1) (Pseudomonas savastanoi (Pseudomonas syringae pv. savastanoi)).